The chain runs to 310 residues: uncharacterized protein (310 aa).

The segment at 1-70 (MAGNSQRRGA…ARGRTDETET (70 aa)) is disordered. Residues 49 to 62 (AAKRAKAQQRRPAR) show a composition bias toward basic residues. 3 residues coordinate S-adenosyl-L-methionine: Gly262, Val282, and Leu291.

This sequence belongs to the class IV-like SAM-binding methyltransferase superfamily. RNA methyltransferase TrmH family.

This is an uncharacterized protein from Mycobacterium marinum (strain ATCC BAA-535 / M).